The following is a 495-amino-acid chain: Serine/threonine-protein phosphatase 2A regulatory subunit sur-6 (495 aa).

The tract at residues 1–27 is disordered; it reads MVMEVDEPAVAATTSQNQPQEHANDFD. Positions 12 to 21 are enriched in polar residues; the sequence is ATTSQNQPQE. WD repeat units follow at residues 64-103, 130-171, 215-253, 264-304, 323-361, and 378-419; these read TEAD…KYVK, EIDE…RKIG, AHTY…ESFN, ELTE…LCDA, EIIA…QPVE, and ENDS…DAKT. The tract at residues 439-459 is disordered; sequence SAKRKRNNLSSSGETTEEDLS. The stretch at 464-495 is one WD 7 repeat; sequence QFDRKILHTAWHPKDNIIALAATNNLYIFSDV.

It belongs to the phosphatase 2A regulatory subunit B family. Part of a complex consisting of a common heterodimeric core enzyme, composed of catalytic subunit let-92 and constant regulatory subunit paa-1, that associates with a variety of regulatory subunits which confer distinct properties to the holoenzyme. Interacts with let-92.

The protein localises to the cytoplasm. Its function is as follows. Probable regulatory subunit of serine/threonine phosphatase let-92. Together with let-92 and constant regulatory subunit paa-1, positively regulates centriole duplication during early embryonic cell divisions by preventing the degradation of sas-5 and kinase zyg-1. In addition, during vulva development, may play a role with phosphatase let-92 and regulatory subunit paa-1 in the induction of vulva cell precursors by positively regulating let-60/Ras-MAP kinase signaling, probably by promoting lin-45 activation. In intestinal epithelial cells, may play a role in the late secretory pathway probably by regulating the exocyst, a protein complex involved in targeting secretory vesicles to the plasma membrane. The sequence is that of Serine/threonine-protein phosphatase 2A regulatory subunit sur-6 from Caenorhabditis elegans.